Here is a 166-residue protein sequence, read N- to C-terminus: SsrA-binding protein (166 aa).

The interval 143 to 166 (HDKREDDKRKQANRDMKSALARYR) is disordered. Positions 144 to 159 (DKREDDKRKQANRDMK) are enriched in basic and acidic residues.

It belongs to the SmpB family.

The protein localises to the cytoplasm. In terms of biological role, required for rescue of stalled ribosomes mediated by trans-translation. Binds to transfer-messenger RNA (tmRNA), required for stable association of tmRNA with ribosomes. tmRNA and SmpB together mimic tRNA shape, replacing the anticodon stem-loop with SmpB. tmRNA is encoded by the ssrA gene; the 2 termini fold to resemble tRNA(Ala) and it encodes a 'tag peptide', a short internal open reading frame. During trans-translation Ala-aminoacylated tmRNA acts like a tRNA, entering the A-site of stalled ribosomes, displacing the stalled mRNA. The ribosome then switches to translate the ORF on the tmRNA; the nascent peptide is terminated with the 'tag peptide' encoded by the tmRNA and targeted for degradation. The ribosome is freed to recommence translation, which seems to be the essential function of trans-translation. The polypeptide is SsrA-binding protein (Prochlorococcus marinus (strain MIT 9211)).